Reading from the N-terminus, the 364-residue chain is DNA polymerase IV (364 aa).

In terms of domain architecture, UmuC spans 14–198; sequence IIHIDMDAFF…LPIEKFHGVG (185 aa). Aspartate 18 and aspartate 116 together coordinate Mg(2+). The active site involves glutamate 117.

Belongs to the DNA polymerase type-Y family. As to quaternary structure, monomer. Requires Mg(2+) as cofactor.

It localises to the cytoplasm. It catalyses the reaction DNA(n) + a 2'-deoxyribonucleoside 5'-triphosphate = DNA(n+1) + diphosphate. Functionally, poorly processive, error-prone DNA polymerase involved in untargeted mutagenesis. Copies undamaged DNA at stalled replication forks, which arise in vivo from mismatched or misaligned primer ends. These misaligned primers can be extended by PolIV. Exhibits no 3'-5' exonuclease (proofreading) activity. May be involved in translesional synthesis, in conjunction with the beta clamp from PolIII. In Streptococcus pyogenes serotype M18 (strain MGAS8232), this protein is DNA polymerase IV.